The sequence spans 215 residues: Probable transaldolase (215 aa).

K83 acts as the Schiff-base intermediate with substrate in catalysis.

The protein belongs to the transaldolase family. Type 3B subfamily.

The protein localises to the cytoplasm. It carries out the reaction D-sedoheptulose 7-phosphate + D-glyceraldehyde 3-phosphate = D-erythrose 4-phosphate + beta-D-fructose 6-phosphate. The protein operates within carbohydrate degradation; pentose phosphate pathway; D-glyceraldehyde 3-phosphate and beta-D-fructose 6-phosphate from D-ribose 5-phosphate and D-xylulose 5-phosphate (non-oxidative stage): step 2/3. Its function is as follows. Transaldolase is important for the balance of metabolites in the pentose-phosphate pathway. The chain is Probable transaldolase from Methanococcus maripaludis (strain C7 / ATCC BAA-1331).